We begin with the raw amino-acid sequence, 86 residues long: Small ribosomal subunit protein uS17 (86 aa).

It belongs to the universal ribosomal protein uS17 family. Part of the 30S ribosomal subunit.

Functionally, one of the primary rRNA binding proteins, it binds specifically to the 5'-end of 16S ribosomal RNA. The protein is Small ribosomal subunit protein uS17 of Tropheryma whipplei (strain TW08/27) (Whipple's bacillus).